Consider the following 507-residue polypeptide: Cuticlin-4 (507 aa).

The signal sequence occupies residues 1–19 (MFHFTRILAAFLLPTLCFC). The Extracellular portion of the chain corresponds to 20–471 (GYSTAPSSTV…KTCFSTSRMY (452 aa)). The 239-residue stretch at 42–280 (VCETASISLL…YGCSNTQPQC (239 aa)) folds into the ZP domain. Residues 292-350 (KTTETAEPYPYDSHESGYPTRPANYPVASSRYPIPTTQAPASYPSSPAPPPPGADIDNG) form a disordered region. Residues N374 and N408 are each glycosylated (N-linked (GlcNAc...) asparagine). A helical membrane pass occupies residues 472–492 (FTLILLCLLFATTVVVFIVIV). At 493 to 507 (QKQRQILAQTAFFKP) the chain is on the cytoplasmic side.

The protein resides in the cell membrane. In terms of biological role, plays a role in alae formation and subsequent cuticle attachment in adults. This Caenorhabditis elegans protein is Cuticlin-4.